Consider the following 391-residue polypeptide: DNA repair protein NreA (391 aa).

Residues 6 to 20 (CAECKGKLLCGRSKC) form a C4-type zinc finger. The PIP motif signature appears at 382–389 (QTSLASFF).

The protein belongs to the Nre family. Interacts with the DNA polymerase sliding clamp (PCNA) via the PIP (PCNA-interacting peptide) motif.

Involved in DNA damage repair. In Archaeoglobus fulgidus (strain ATCC 49558 / DSM 4304 / JCM 9628 / NBRC 100126 / VC-16), this protein is DNA repair protein NreA.